Here is a 229-residue protein sequence, read N- to C-terminus: Large ribosomal subunit protein uL1 (229 aa).

This sequence belongs to the universal ribosomal protein uL1 family. As to quaternary structure, part of the 50S ribosomal subunit.

In terms of biological role, binds directly to 23S rRNA. The L1 stalk is quite mobile in the ribosome, and is involved in E site tRNA release. Protein L1 is also a translational repressor protein, it controls the translation of the L11 operon by binding to its mRNA. The polypeptide is Large ribosomal subunit protein uL1 (Phenylobacterium zucineum (strain HLK1)).